Here is a 567-residue protein sequence, read N- to C-terminus: Septation ring formation regulator EzrA (567 aa).

Topologically, residues 1-2 (ME) are extracellular. Residues 3-21 (FIIGLIVILLALFSVGYFL) traverse the membrane as a helical segment. Over 22–567 (RKNIYKEIDR…AQQEKEYQHQ (546 aa)) the chain is Cytoplasmic. Coiled-coil stretches lie at residues 108 to 185 (IEDL…YEEE), 243 to 375 (KGYK…RDHV), and 402 to 529 (KGHL…ERRF).

Belongs to the EzrA family.

It is found in the cell membrane. Negative regulator of FtsZ ring formation; modulates the frequency and position of FtsZ ring formation. Inhibits FtsZ ring formation at polar sites. Interacts either with FtsZ or with one of its binding partners to promote depolymerization. This Bacillus pumilus (strain SAFR-032) protein is Septation ring formation regulator EzrA.